The following is a 194-amino-acid chain: Peroxynitrite isomerase 1 (194 aa).

The GXWXGXG signature appears at 40–46 (GVWRGEG). Heme b contacts are provided by K157 and H184.

The protein belongs to the nitrobindin family. Homodimer. Requires heme b as cofactor.

It carries out the reaction peroxynitrite = nitrate. It participates in nitrogen metabolism. Heme-binding protein able to scavenge peroxynitrite and to protect free L-tyrosine against peroxynitrite-mediated nitration, by acting as a peroxynitrite isomerase that converts peroxynitrite to nitrate. Therefore, this protein likely plays a role in peroxynitrite sensing and in the detoxification of reactive nitrogen and oxygen species (RNS and ROS, respectively). Is able to bind nitric oxide (NO) in vitro, but may act as a sensor of peroxynitrite levels in vivo. The chain is Peroxynitrite isomerase 1 from Mycobacterium ulcerans (strain Agy99).